Consider the following 217-residue polypeptide: Variable small protein 22 (217 aa).

The N-terminal stretch at 1-18 is a signal peptide; that stretch reads MRKRISAIIMTLFMVFMS. Cysteine 19 is lipidated: N-palmitoyl cysteine. A lipid anchor (S-diacylglycerol cysteine) is attached at cysteine 19. Residues 151 to 174 form a disordered region; that stretch reads LGKNDASDDDTKKAIKKDNSDKTK. Positions 155 to 174 are enriched in basic and acidic residues; that stretch reads DASDDDTKKAIKKDNSDKTK.

The protein belongs to the variable small protein (Vsp) family.

The protein resides in the cell outer membrane. Its function is as follows. The Vlp and Vsp proteins are antigenically distinct proteins, only one vlp or vsp gene is transcriptionally active at any one time. Switching between these genes is a mechanism of host immune response evasion. This is Variable small protein 22 from Borrelia hermsii.